A 602-amino-acid chain; its full sequence is Multiple epidermal growth factor-like domains protein 9 (602 aa).

The signal sequence occupies residues 1–30 (MNGGAERAMRSLPSLGGLALLCCAAAAAAA). Topologically, residues 31-514 (AVASAASAGN…LADVSWTQFN (484 aa)) are extracellular. The interval 38–199 (AGNVTGGGGA…PATEAPSSPP (162 aa)) is disordered. Residue Asn-40 is glycosylated (N-linked (GlcNAc...) asparagine). Composition is skewed to low complexity over residues 68 to 85 (PRAT…PPRA) and 139 to 166 (APTR…TVPA). A compositionally biased stretch (pro residues) spans 167-176 (PTTPRTPTPD). The N-linked (GlcNAc...) asparagine glycan is linked to Asn-182. Positions 187-199 (PTPPATEAPSSPP) are enriched in pro residues. Disulfide bonds link Cys-204–Cys-217, Cys-206–Cys-224, Cys-226–Cys-235, Cys-238–Cys-251, Cys-254–Cys-266, Cys-256–Cys-272, Cys-274–Cys-283, Cys-286–Cys-298, Cys-301–Cys-310, Cys-303–Cys-317, Cys-320–Cys-329, Cys-332–Cys-346, Cys-349–Cys-360, Cys-351–Cys-371, Cys-374–Cys-383, Cys-386–Cys-397, Cys-400–Cys-415, Cys-402–Cys-422, Cys-425–Cys-434, and Cys-437–Cys-449. Laminin EGF-like domains lie at 204–253 (CNCS…LCQP), 254–300 (CDCS…GCLP), 301–348 (CQCN…ECLR), 349–399 (CPCS…ICRK), and 400–451 (CQCH…NCIK). 2 N-linked (GlcNAc...) asparagine glycosylation sites follow: Asn-205 and Asn-218. Asn-245 carries N-linked (GlcNAc...) asparagine glycosylation. N-linked (GlcNAc...) asparagine glycosylation occurs at Asn-267. N-linked (GlcNAc...) asparagine glycosylation occurs at Asn-305. Residue Asn-428 is glycosylated (N-linked (GlcNAc...) asparagine). Asn-468, Asn-481, and Asn-500 each carry an N-linked (GlcNAc...) asparagine glycan. A helical transmembrane segment spans residues 515–535 (IIILTVIIIVVVLLMGFVGAV). At 536–602 (YMYREYQNRK…LTTPIHNYKA (67 aa)) the chain is on the cytoplasmic side.

Its subcellular location is the membrane. This chain is Multiple epidermal growth factor-like domains protein 9 (MEGF9), found in Homo sapiens (Human).